The sequence spans 141 residues: Nucleoside diphosphate kinase (141 aa).

ATP contacts are provided by lysine 9, phenylalanine 57, arginine 85, threonine 91, arginine 102, and asparagine 112. The active-site Pros-phosphohistidine intermediate is the histidine 115.

This sequence belongs to the NDK family. In terms of assembly, homotetramer. Requires Mg(2+) as cofactor.

The protein resides in the cytoplasm. The catalysed reaction is a 2'-deoxyribonucleoside 5'-diphosphate + ATP = a 2'-deoxyribonucleoside 5'-triphosphate + ADP. It catalyses the reaction a ribonucleoside 5'-diphosphate + ATP = a ribonucleoside 5'-triphosphate + ADP. Major role in the synthesis of nucleoside triphosphates other than ATP. The ATP gamma phosphate is transferred to the NDP beta phosphate via a ping-pong mechanism, using a phosphorylated active-site intermediate. The chain is Nucleoside diphosphate kinase from Chlamydia muridarum (strain MoPn / Nigg).